Consider the following 447-residue polypeptide: NADH-quinone oxidoreductase subunit N (447 aa).

A run of 13 helical transmembrane segments spans residues 4–24, 27–47, 68–88, 92–112, 113–133, 146–166, 181–201, 215–235, 245–265, 280–300, 302–322, 342–362, and 376–395; these read FAAL…MLAA, LPGL…VALA, LTGL…RPDG, EGPA…GAVH, AASL…LFVL, FLIL…LGHA, ALLT…LALV, PGAA…TALV, VWAL…NLAA, VGHA…APAA, LFYI…AALI, GAAM…AGFF, and AWAL…YYYL.

Belongs to the complex I subunit 2 family. As to quaternary structure, NDH-1 is composed of 14 different subunits. Subunits NuoA, H, J, K, L, M, N constitute the membrane sector of the complex.

The protein localises to the cell inner membrane. The catalysed reaction is a quinone + NADH + 5 H(+)(in) = a quinol + NAD(+) + 4 H(+)(out). Its function is as follows. NDH-1 shuttles electrons from NADH, via FMN and iron-sulfur (Fe-S) centers, to quinones in the respiratory chain. The immediate electron acceptor for the enzyme in this species is believed to be ubiquinone. Couples the redox reaction to proton translocation (for every two electrons transferred, four hydrogen ions are translocated across the cytoplasmic membrane), and thus conserves the redox energy in a proton gradient. This Cereibacter sphaeroides (strain ATCC 17025 / ATH 2.4.3) (Rhodobacter sphaeroides) protein is NADH-quinone oxidoreductase subunit N.